The sequence spans 157 residues: Probable succinate transporter subunit YjjB (157 aa).

4 helical membrane-spanning segments follow: residues 8–28, 50–70, 87–107, and 129–149; these read FALA…AMVF, MILM…SMLV, VFTV…TAMI, and FLTA…PGLW.

Belongs to the ThrE exporter (TC 2.A.79) family. As to quaternary structure, the transporter is composed of YjjB and YjjP.

It localises to the cell inner membrane. Involved in succinate export with YjjP. Both proteins are required for export. This is Probable succinate transporter subunit YjjB from Escherichia coli (strain ATCC 8739 / DSM 1576 / NBRC 3972 / NCIMB 8545 / WDCM 00012 / Crooks).